A 286-amino-acid chain; its full sequence is Pyridoxal kinase PdxY (286 aa).

Substrate is bound by residues S9 and 44-45 (TQ). Residues D111, A143, E148, K181, and 208-211 (RPLV) each bind ATP. Residue D223 coordinates substrate.

This sequence belongs to the pyridoxine kinase family. PdxY subfamily. Homodimer. Mg(2+) is required as a cofactor.

The enzyme catalyses pyridoxal + ATP = pyridoxal 5'-phosphate + ADP + H(+). Its pathway is cofactor metabolism; pyridoxal 5'-phosphate salvage; pyridoxal 5'-phosphate from pyridoxal: step 1/1. Functionally, pyridoxal kinase involved in the salvage pathway of pyridoxal 5'-phosphate (PLP). Catalyzes the phosphorylation of pyridoxal to PLP. The sequence is that of Pyridoxal kinase PdxY from Yersinia pestis bv. Antiqua (strain Antiqua).